The primary structure comprises 474 residues: Glutamate--tRNA ligase (474 aa).

Positions proline 9–glycine 19 match the 'HIGH' region motif. The 'KMSKS' region motif lies at lysine 240 to arginine 244. An ATP-binding site is contributed by lysine 243.

It belongs to the class-I aminoacyl-tRNA synthetase family. Glutamate--tRNA ligase type 1 subfamily. Monomer.

The protein localises to the cytoplasm. It catalyses the reaction tRNA(Glu) + L-glutamate + ATP = L-glutamyl-tRNA(Glu) + AMP + diphosphate. Catalyzes the attachment of glutamate to tRNA(Glu) in a two-step reaction: glutamate is first activated by ATP to form Glu-AMP and then transferred to the acceptor end of tRNA(Glu). The sequence is that of Glutamate--tRNA ligase from Aliivibrio fischeri (strain ATCC 700601 / ES114) (Vibrio fischeri).